Reading from the N-terminus, the 475-residue chain is Aspartyl/glutamyl-tRNA(Asn/Gln) amidotransferase subunit B (475 aa).

The protein belongs to the GatB/GatE family. GatB subfamily. As to quaternary structure, heterotrimer of A, B and C subunits.

The catalysed reaction is L-glutamyl-tRNA(Gln) + L-glutamine + ATP + H2O = L-glutaminyl-tRNA(Gln) + L-glutamate + ADP + phosphate + H(+). The enzyme catalyses L-aspartyl-tRNA(Asn) + L-glutamine + ATP + H2O = L-asparaginyl-tRNA(Asn) + L-glutamate + ADP + phosphate + 2 H(+). In terms of biological role, allows the formation of correctly charged Asn-tRNA(Asn) or Gln-tRNA(Gln) through the transamidation of misacylated Asp-tRNA(Asn) or Glu-tRNA(Gln) in organisms which lack either or both of asparaginyl-tRNA or glutaminyl-tRNA synthetases. The reaction takes place in the presence of glutamine and ATP through an activated phospho-Asp-tRNA(Asn) or phospho-Glu-tRNA(Gln). This is Aspartyl/glutamyl-tRNA(Asn/Gln) amidotransferase subunit B from Bacillus cereus (strain G9842).